The following is a 286-amino-acid chain: ATP synthase gamma chain (286 aa).

It belongs to the ATPase gamma chain family. In terms of assembly, F-type ATPases have 2 components, CF(1) - the catalytic core - and CF(0) - the membrane proton channel. CF(1) has five subunits: alpha(3), beta(3), gamma(1), delta(1), epsilon(1). CF(0) has three main subunits: a, b and c.

The protein localises to the cell inner membrane. Functionally, produces ATP from ADP in the presence of a proton gradient across the membrane. The gamma chain is believed to be important in regulating ATPase activity and the flow of protons through the CF(0) complex. The chain is ATP synthase gamma chain from Shewanella putrefaciens (strain CN-32 / ATCC BAA-453).